A 246-amino-acid polypeptide reads, in one-letter code: Chemokine-binding protein (246 aa).

Residues Ser-108–Pro-125 are compositionally biased toward polar residues. The segment at Ser-108–Pro-132 is disordered.

Belongs to the orthopoxvirus OPG001 family.

The protein localises to the secreted. Functionally, inhibits host immune defense by binding to host chemokines. Binds host CC chemokines (beta chemokines) such as RANTES with high affinity, but not CXC or C chemokines (alpha and gamma chemokines). The sequence is that of Chemokine-binding protein (OPG001) from Monkeypox virus.